The following is a 169-amino-acid chain: Peptide deformylase (169 aa).

Residues cysteine 91 and histidine 133 each coordinate Fe cation. The active site involves glutamate 134. A Fe cation-binding site is contributed by histidine 137.

It belongs to the polypeptide deformylase family. Requires Fe(2+) as cofactor.

It carries out the reaction N-terminal N-formyl-L-methionyl-[peptide] + H2O = N-terminal L-methionyl-[peptide] + formate. Its function is as follows. Removes the formyl group from the N-terminal Met of newly synthesized proteins. Requires at least a dipeptide for an efficient rate of reaction. N-terminal L-methionine is a prerequisite for activity but the enzyme has broad specificity at other positions. The protein is Peptide deformylase of Salmonella typhi.